The primary structure comprises 432 residues: Trigger factor (432 aa).

The 86-residue stretch at 161–246 (EDRVTIDFTG…LKKVEERELP (86 aa)) folds into the PPIase FKBP-type domain.

The protein belongs to the FKBP-type PPIase family. Tig subfamily.

The protein resides in the cytoplasm. The enzyme catalyses [protein]-peptidylproline (omega=180) = [protein]-peptidylproline (omega=0). Functionally, involved in protein export. Acts as a chaperone by maintaining the newly synthesized protein in an open conformation. Functions as a peptidyl-prolyl cis-trans isomerase. The polypeptide is Trigger factor (Citrobacter koseri (strain ATCC BAA-895 / CDC 4225-83 / SGSC4696)).